The primary structure comprises 397 residues: Elongation factor Tu (397 aa).

The 198-residue stretch at 10–207 (KPHVNIGTIG…AVDESIPDPV (198 aa)) folds into the tr-type G domain. Residues 19–26 (GHVDHGKT) form a G1 region. 19 to 26 (GHVDHGKT) is a GTP binding site. A Mg(2+)-binding site is contributed by Thr-26. Residues 63-67 (GITIN) are G2. The G3 stretch occupies residues 84-87 (DAPG). GTP-binding positions include 84-88 (DAPGH) and 139-142 (NKAD). A G4 region spans residues 139-142 (NKAD). Residues 177–179 (SGL) are G5.

This sequence belongs to the TRAFAC class translation factor GTPase superfamily. Classic translation factor GTPase family. EF-Tu/EF-1A subfamily. Monomer.

It localises to the cytoplasm. The catalysed reaction is GTP + H2O = GDP + phosphate + H(+). In terms of biological role, GTP hydrolase that promotes the GTP-dependent binding of aminoacyl-tRNA to the A-site of ribosomes during protein biosynthesis. The polypeptide is Elongation factor Tu (Tropheryma whipplei (strain TW08/27) (Whipple's bacillus)).